An 87-amino-acid chain; its full sequence is UPF0367 protein SynWH7803_2240 (87 aa).

The protein belongs to the UPF0367 family.

This Synechococcus sp. (strain WH7803) protein is UPF0367 protein SynWH7803_2240.